The primary structure comprises 342 residues: Phosphate acyltransferase (342 aa).

This sequence belongs to the PlsX family. As to quaternary structure, homodimer. Probably interacts with PlsY.

The protein localises to the cytoplasm. It catalyses the reaction a fatty acyl-[ACP] + phosphate = an acyl phosphate + holo-[ACP]. It functions in the pathway lipid metabolism; phospholipid metabolism. Its function is as follows. Catalyzes the reversible formation of acyl-phosphate (acyl-PO(4)) from acyl-[acyl-carrier-protein] (acyl-ACP). This enzyme utilizes acyl-ACP as fatty acyl donor, but not acyl-CoA. The sequence is that of Phosphate acyltransferase from Leuconostoc mesenteroides subsp. mesenteroides (strain ATCC 8293 / DSM 20343 / BCRC 11652 / CCM 1803 / JCM 6124 / NCDO 523 / NBRC 100496 / NCIMB 8023 / NCTC 12954 / NRRL B-1118 / 37Y).